Reading from the N-terminus, the 93-residue chain is MARSLKKGPFADESLLKKVDAMNASGDKSVIKTWSRRSTIFPSFVGHTIAVHDGRKHVPVYVTEDMVGHKLGEFVATRTYRGHGKDEKKSGVR.

It belongs to the universal ribosomal protein uS19 family.

Functionally, protein S19 forms a complex with S13 that binds strongly to the 16S ribosomal RNA. This chain is Small ribosomal subunit protein uS19, found in Agathobacter rectalis (strain ATCC 33656 / DSM 3377 / JCM 17463 / KCTC 5835 / VPI 0990) (Eubacterium rectale).